The sequence spans 609 residues: Heat shock factor protein (609 aa).

The span at 1–33 shows a compositional bias: polar residues; the sequence is MIQTASTISSNGGTNQGMESSSANSPEMNGTQN. Residues 1–47 are disordered; it reads MIQTASTISSNGGTNQGMESSSANSPEMNGTQNSMSVGMSGSGSSQN. The segment covering 34–45 has biased composition (low complexity); sequence SMSVGMSGSGSS. Residues 50–156 mediate DNA binding; sequence ITQFSNKLYN…LLCLVTRKKA (107 aa). 4 disordered regions span residues 255 to 298, 310 to 371, 411 to 445, and 567 to 609; these read PTVS…GKYR, SSFN…TDPK, NNTSSEQHHNSYRGSVSNSQPSGNLSESTNLQPVQ, and SNGN…SIGA. Composition is skewed to polar residues over residues 257–277, 339–360, 422–443, and 567–597; these read VSPTNEPSAHSRPSPQGTTAN, DSFNNSIDSYISPNQSPNTDVP, YRGSVSNSQPSGNLSESTNLQP, and SNGNTFGSNPVSLPNQQKSVNPSLMTVSSPR. S350 carries the phosphoserine modification. Over residues 598–609 the composition is skewed to basic residues; it reads QVRKKRKSSIGA.

This sequence belongs to the HSF family. Homotrimer.

The protein localises to the nucleus. Its function is as follows. DNA-binding protein that specifically binds heat shock promoter elements (HSE) and activates transcription. Also required for growth at normal temperatures. The protein is Heat shock factor protein (hsf1) of Schizosaccharomyces pombe (strain 972 / ATCC 24843) (Fission yeast).